The following is a 341-amino-acid chain: Serine/threonine-protein kinase-like protein At5g23170 (341 aa).

Residues 16–298 enclose the Protein kinase domain; the sequence is FSPSKLIGKG…FGEITAEIVA (283 aa). ATP is bound by residues 22–30 and Lys-51; that span reads IGKGSHGYV. The interval 52-75 is disordered; that stretch reads TPSSLSPSSPSSSSSSKSEQTKKL. The segment covering 53–69 has biased composition (low complexity); that stretch reads PSSLSPSSPSSSSSSKS. The active-site Proton acceptor is the Asp-153. Residues 311–332 are a coiled coil; that stretch reads MSVLRRVVKLKRRKKRLRETLT.

The protein belongs to the protein kinase superfamily. Ser/Thr protein kinase family. In terms of tissue distribution, ubiquitous. Higher expression in mature stamina and pollen.

The catalysed reaction is L-seryl-[protein] + ATP = O-phospho-L-seryl-[protein] + ADP + H(+). The enzyme catalyses L-threonyl-[protein] + ATP = O-phospho-L-threonyl-[protein] + ADP + H(+). The chain is Serine/threonine-protein kinase-like protein At5g23170 from Arabidopsis thaliana (Mouse-ear cress).